Consider the following 382-residue polypeptide: Protein-arginine rhamnosyltransferase (382 aa).

Residues 17–20 (NFGD), Tyr187, Gln252, and 268–272 (RGEDS) each bind dTDP-beta-L-rhamnose. Asp20 (proton acceptor) is an active-site residue. Residue Glu270 is part of the active site.

The protein belongs to the glycosyltransferase 104 family.

The catalysed reaction is dTDP-beta-L-rhamnose + L-arginyl-[protein] = N(omega)-(alpha-L-rhamnosyl)-L-arginyl-[protein] + dTDP + H(+). Protein-arginine rhamnosyltransferase that catalyzes the transfer of a single rhamnose to elongation factor P (EF-P) on 'Lys-32', a modification required for EF-P-dependent rescue of polyproline stalled ribosomes. This chain is Protein-arginine rhamnosyltransferase, found in Neisseria meningitidis.